Here is a 186-residue protein sequence, read N- to C-terminus: NAD(+) phosphorylase MbcT (186 aa).

The protein belongs to the MbcT/ParT/Res family. In terms of assembly, forms a heterotetramer with cognate antitoxin MbcA.

It catalyses the reaction phosphate + NAD(+) = ADP-alpha-D-ribose 1''-phosphate + nicotinamide + H(+). Its function is as follows. Toxic component of a type II toxin-antitoxin (TA) system. Degrades NAD(+) by phosphorolysis. Neutralized by its cognate antitoxin MbcA. In Mycobacterium bovis (strain ATCC BAA-935 / AF2122/97), this protein is NAD(+) phosphorylase MbcT (mbcT).